Consider the following 320-residue polypeptide: MAPPAAVSPPSRSAELATSTKLPVMSKNINTKTVEEMLGQWDDFKFAPIRESQVSRAMTRRYFQDLDNYAESDIVIIGAGSCGLSAAYILGKKRPDLKIAIIEASVSPGGGAWLGGQLFSAMIMRKPADAFLREVGVPYEDEGNYVVVKHAALFTSTIMSKVLQMPNIKLFNATCVEDLITRPSEEGVRIAGVVTNWTLVSMHHDDQSCMDPNTINAPLIISTTGHDGPMGAFCVKRLVSMQRIEKLGGMRGLDMNLAEDAIVKGTREIVPGLIVGGMELSEVDGANRMGPTFGAMALSGLKAAEEALKIFDTRKKQNDL.

Substrate is bound by residues C82, 103–104 (EA), G111, and V176. C209 carries the post-translational modification 2,3-didehydroalanine (Cys). Residues D211, H226, M278, and 288–290 (RMG) contribute to the substrate site.

It belongs to the THI4 family. In terms of assembly, homooctamer. Fe cation serves as cofactor. Post-translationally, during the catalytic reaction, a sulfide is transferred from Cys-209 to a reaction intermediate, generating a dehydroalanine residue.

It localises to the cytoplasm. The protein localises to the nucleus. The enzyme catalyses [ADP-thiazole synthase]-L-cysteine + glycine + NAD(+) = [ADP-thiazole synthase]-dehydroalanine + ADP-5-ethyl-4-methylthiazole-2-carboxylate + nicotinamide + 3 H2O + 2 H(+). Its function is as follows. Involved in biosynthesis of the thiamine precursor thiazole. Catalyzes the conversion of NAD and glycine to adenosine diphosphate 5-(2-hydroxyethyl)-4-methylthiazole-2-carboxylic acid (ADT), an adenylated thiazole intermediate. The reaction includes an iron-dependent sulfide transfer from a conserved cysteine residue of the protein to a thiazole intermediate. The enzyme can only undergo a single turnover, which suggests it is a suicide enzyme. May have additional roles in adaptation to various stress conditions and in DNA damage tolerance. The protein is Thiamine thiazole synthase (sti35) of Fusarium oxysporum f. sp. lycopersici (strain 4287 / CBS 123668 / FGSC 9935 / NRRL 34936) (Fusarium vascular wilt of tomato).